The following is a 310-amino-acid chain: Syntaxin-related protein KNOLLE (310 aa).

Position 1 is an N-acetylmethionine (Met1). Over 1–283 the chain is Cytoplasmic; the sequence is MNDLMTKSFM…AKSHQRNSRK (283 aa). Residues 94-159 are a coiled coil; that stretch reads NEIVSGLRKA…FQGLRQKMMS (66 aa). One can recognise a t-SNARE coiled-coil homology domain in the interval 212–274; sequence VVEIQDRYDA…ADGANELKTA (63 aa). The chain crosses the membrane as a helical; Anchor for type IV membrane protein span at residues 284–304; that stretch reads WMCIGIIVLLLIILIVVIPII. Residues 305 to 310 lie on the Vesicular side of the membrane; sequence TSFSSS.

It belongs to the syntaxin family. In terms of assembly, interacts with SNAP33 and/or NPSN11 to form a t-SNARE complex and with KEULE. As to expression, abundant in flowers and developing siliques. A low level expression is seen in the seedlings, roots, and leaves.

It localises to the membrane. Involved in cytokinesis. Acts as a cell plate-specific syntaxin, required for the fusion of vesicles at the plane of cell division. In Arabidopsis thaliana (Mouse-ear cress), this protein is Syntaxin-related protein KNOLLE (KN).